We begin with the raw amino-acid sequence, 449 residues long: D-inositol 3-phosphate glycosyltransferase (449 aa).

His43 is a binding site for 1D-myo-inositol 3-phosphate. Residues 49–50 (QP) and Gly57 contribute to the UDP-N-acetyl-alpha-D-glucosamine site. 1D-myo-inositol 3-phosphate is bound by residues 54–59 (DAGGMN), Lys112, Tyr145, Thr169, and Arg189. UDP-N-acetyl-alpha-D-glucosamine contacts are provided by Arg263, Lys268, and Gln324. Residues Tyr333, Arg334, and Ala336 each contribute to the Mg(2+) site. Glu346 and Glu354 together coordinate UDP-N-acetyl-alpha-D-glucosamine. Thr360 serves as a coordination point for Mg(2+).

It belongs to the glycosyltransferase group 1 family. MshA subfamily. As to quaternary structure, homodimer.

The catalysed reaction is 1D-myo-inositol 3-phosphate + UDP-N-acetyl-alpha-D-glucosamine = 1D-myo-inositol 2-acetamido-2-deoxy-alpha-D-glucopyranoside 3-phosphate + UDP + H(+). Its function is as follows. Catalyzes the transfer of a N-acetyl-glucosamine moiety to 1D-myo-inositol 3-phosphate to produce 1D-myo-inositol 2-acetamido-2-deoxy-glucopyranoside 3-phosphate in the mycothiol biosynthesis pathway. In Segniliparus rotundus (strain ATCC BAA-972 / CDC 1076 / CIP 108378 / DSM 44985 / JCM 13578), this protein is D-inositol 3-phosphate glycosyltransferase.